We begin with the raw amino-acid sequence, 433 residues long: Tol-Pal system protein TolB (433 aa).

The signal sequence occupies residues 1-21; that stretch reads MINLFRGLLVVLCFASAMVSA.

The protein belongs to the TolB family. In terms of assembly, the Tol-Pal system is composed of five core proteins: the inner membrane proteins TolA, TolQ and TolR, the periplasmic protein TolB and the outer membrane protein Pal. They form a network linking the inner and outer membranes and the peptidoglycan layer.

The protein localises to the periplasm. Functionally, part of the Tol-Pal system, which plays a role in outer membrane invagination during cell division and is important for maintaining outer membrane integrity. This Pseudomonas syringae pv. syringae (strain B728a) protein is Tol-Pal system protein TolB.